The sequence spans 296 residues: tRNA dimethylallyltransferase (296 aa).

9–16 is a binding site for ATP; that stretch reads GTTASGKS. 11–16 provides a ligand contact to substrate; the sequence is TASGKS. The segment at 34–37 is interaction with substrate tRNA; it reads DSLA.

This sequence belongs to the IPP transferase family. As to quaternary structure, monomer. Mg(2+) is required as a cofactor.

The enzyme catalyses adenosine(37) in tRNA + dimethylallyl diphosphate = N(6)-dimethylallyladenosine(37) in tRNA + diphosphate. Catalyzes the transfer of a dimethylallyl group onto the adenine at position 37 in tRNAs that read codons beginning with uridine, leading to the formation of N6-(dimethylallyl)adenosine (i(6)A). The polypeptide is tRNA dimethylallyltransferase (Campylobacter curvus (strain 525.92)).